A 599-amino-acid polypeptide reads, in one-letter code: Dual specificity tyrosine-phosphorylation-regulated kinase 2 (599 aa).

A disordered region spans residues 1–55 (MLTRKPSAAAPAAYPTGRGGDTAVRQLQASPGIGAGAPRSGVGTGPPSPIALPPL). Position 30 is a phosphoserine (Ser-30). A Phosphothreonine; by ATM modification is found at Thr-104. The Nuclear localization signal signature appears at 187–189 (KKR). In terms of domain architecture, Protein kinase spans 220–533 (YEVLKVIGKG…PGQALRHPWL (314 aa)). Residues 226–234 (IGKGSFGQV), Lys-249, and 299–302 (FELL) contribute to the ATP site. The active-site Proton acceptor is the Asp-346. Thr-379 is subject to Phosphothreonine; by MAP3K10. Position 380 is a phosphotyrosine; by autocatalysis (Tyr-380). Ser-440 bears the Phosphoserine; by ATM mark. Ser-447 is subject to Phosphoserine; by MAP3K10.

Belongs to the protein kinase superfamily. CMGC Ser/Thr protein kinase family. MNB/DYRK subfamily. As to quaternary structure, component of an E3 ligase complex containing DYRK2, EDD/UBR5, DDB1 and DCAF1 (EDVP complex). Interacts directly with EDD/UBR5, DDB1 and DCAF1. Interacts with SIAH2 and MDM2. Interacts with MAP3K10 and NFATC1. May also interact with CCNL2. Mg(2+) serves as cofactor. Mn(2+) is required as a cofactor. Autophosphorylates cotranslationally on the second tyrosine residue in the Tyr-X-Tyr motif in the activation loop, but once mature, does not have any protein tyrosine kinase activity. Phosphorylated at Thr-104 and Ser-440 by ATM in response to genotoxic stress. In terms of processing, under normal conditions, polyubiquitinated in the nucleus by MDM2, leading to its proteasomal degradation. Phosphorylation on Thr-104 and Ser-440 by ATM in response to genotoxic stress disrupts MDM2 binding and prevents MDM2-mediated ubiquitination and subsequent proteasomal degradation. Polyubiquitinated by SIAH2, leading to its proteasomal degradation. Polyubiquitinated by SIAH2 occurs under normal conditions, and is enhanced in response to hypoxia.

The protein resides in the cytoplasm. The protein localises to the nucleus. The catalysed reaction is L-seryl-[protein] + ATP = O-phospho-L-seryl-[protein] + ADP + H(+). It catalyses the reaction L-threonyl-[protein] + ATP = O-phospho-L-threonyl-[protein] + ADP + H(+). The enzyme catalyses L-tyrosyl-[protein] + ATP = O-phospho-L-tyrosyl-[protein] + ADP + H(+). With respect to regulation, activated by autophosphorylation on the second tyrosine residue in the Tyr-X-Tyr motif in the activation loop. Functionally, serine/threonine-protein kinase involved in the regulation of the mitotic cell cycle, cell proliferation, apoptosis, organization of the cytoskeleton and neurite outgrowth. Functions in part via its role in ubiquitin-dependent proteasomal protein degradation. Functions downstream of ATM and phosphorylates p53/TP53 at 'Ser-46', and thereby contributes to the induction of apoptosis in response to DNA damage. Phosphorylates NFATC1, and thereby inhibits its accumulation in the nucleus and its transcription factor activity. Phosphorylates EIF2B5 at 'Ser-544', enabling its subsequent phosphorylation and inhibition by GSK3B. Likewise, phosphorylation of NFATC1, CRMP2/DPYSL2 and CRMP4/DPYSL3 promotes their subsequent phosphorylation by GSK3B. May play a general role in the priming of GSK3 substrates. Inactivates GYS1 by phosphorylation at 'Ser-641', and potentially also a second phosphorylation site, thus regulating glycogen synthesis. Mediates EDVP E3 ligase complex formation and is required for the phosphorylation and subsequent degradation of KATNA1. Phosphorylates TERT at 'Ser-457', promoting TERT ubiquitination by the EDVP complex. Phosphorylates SIAH2, and thereby increases its ubiquitin ligase activity. Promotes the proteasomal degradation of MYC and JUN, and thereby regulates progress through the mitotic cell cycle and cell proliferation. Promotes proteasomal degradation of GLI2 and GLI3, and thereby plays a role in smoothened and sonic hedgehog signaling. Phosphorylates CRMP2/DPYSL2, CRMP4/DPYSL3, DCX, EIF2B5, EIF4EBP1, GLI2, GLI3, GYS1, JUN, MDM2, MYC, NFATC1, p53/TP53, TAU/MAPT and KATNA1. Can phosphorylate histone H1, histone H3 and histone H2B (in vitro). Can phosphorylate CARHSP1 (in vitro). Plays a role in cytoskeleton organization and neurite outgrowth via its phosphorylation of DCX. The chain is Dual specificity tyrosine-phosphorylation-regulated kinase 2 from Mus musculus (Mouse).